A 267-amino-acid polypeptide reads, in one-letter code: Enolase-phosphatase E1 (267 aa).

Aspartate 11 and glutamate 13 together coordinate Mg(2+). Residues 155–156 (SS) and lysine 189 contribute to the substrate site. Mg(2+) is bound at residue aspartate 215.

It belongs to the HAD-like hydrolase superfamily. MasA/MtnC family. In terms of assembly, monomer. The cofactor is Mg(2+).

The protein resides in the cytoplasm. Its subcellular location is the nucleus. It catalyses the reaction 5-methylsulfanyl-2,3-dioxopentyl phosphate + H2O = 1,2-dihydroxy-5-(methylsulfanyl)pent-1-en-3-one + phosphate. The protein operates within amino-acid biosynthesis; L-methionine biosynthesis via salvage pathway; L-methionine from S-methyl-5-thio-alpha-D-ribose 1-phosphate: step 3/6. It participates in amino-acid biosynthesis; L-methionine biosynthesis via salvage pathway; L-methionine from S-methyl-5-thio-alpha-D-ribose 1-phosphate: step 4/6. In terms of biological role, bifunctional enzyme that catalyzes the enolization of 2,3-diketo-5-methylthiopentyl-1-phosphate (DK-MTP-1-P) into the intermediate 2-hydroxy-3-keto-5-methylthiopentenyl-1-phosphate (HK-MTPenyl-1-P), which is then dephosphorylated to form the acireductone 1,2-dihydroxy-3-keto-5-methylthiopentene (DHK-MTPene). The chain is Enolase-phosphatase E1 (enoph1) from Dictyostelium discoideum (Social amoeba).